The primary structure comprises 958 residues: Valine--tRNA ligase (958 aa).

A 'HIGH' region motif is present at residues 45-55 (PNVTGSLHMGH). The short motif at 571–575 (KMSKS) is the 'KMSKS' region element. K574 lines the ATP pocket. Residues 892-958 (AAERTRLDKE…EALERLKQAS (67 aa)) are a coiled coil.

The protein belongs to the class-I aminoacyl-tRNA synthetase family. ValS type 1 subfamily. Monomer.

It is found in the cytoplasm. It carries out the reaction tRNA(Val) + L-valine + ATP = L-valyl-tRNA(Val) + AMP + diphosphate. Catalyzes the attachment of valine to tRNA(Val). As ValRS can inadvertently accommodate and process structurally similar amino acids such as threonine, to avoid such errors, it has a 'posttransfer' editing activity that hydrolyzes mischarged Thr-tRNA(Val) in a tRNA-dependent manner. This Bradyrhizobium diazoefficiens (strain JCM 10833 / BCRC 13528 / IAM 13628 / NBRC 14792 / USDA 110) protein is Valine--tRNA ligase.